The chain runs to 197 residues: ATP-dependent Clp protease proteolytic subunit 1 (197 aa).

Residue Ser-96 is the Nucleophile of the active site. His-121 is an active-site residue.

Belongs to the peptidase S14 family. Fourteen ClpP subunits assemble into 2 heptameric rings which stack back to back to give a disk-like structure with a central cavity, resembling the structure of eukaryotic proteasomes.

It localises to the cytoplasm. The enzyme catalyses Hydrolysis of proteins to small peptides in the presence of ATP and magnesium. alpha-casein is the usual test substrate. In the absence of ATP, only oligopeptides shorter than five residues are hydrolyzed (such as succinyl-Leu-Tyr-|-NHMec, and Leu-Tyr-Leu-|-Tyr-Trp, in which cleavage of the -Tyr-|-Leu- and -Tyr-|-Trp bonds also occurs).. In terms of biological role, cleaves peptides in various proteins in a process that requires ATP hydrolysis. Has a chymotrypsin-like activity. Plays a major role in the degradation of misfolded proteins. The chain is ATP-dependent Clp protease proteolytic subunit 1 from Synechococcus sp. (strain CC9902).